The primary structure comprises 140 residues: MSERDKLYHVLLDRLYAKLPKKDLASETQTLPTLSIINVGNTTIIRNFSEYCDRIRREDKICMRYLLKELAAAGSISENGQLMIQGKFSNAIVNTFMDRFLKTYVQCSTCKSLDTVLVKDKKIWYIQCLACGAKNPVKPL.

This sequence belongs to the eIF-2-beta/eIF-5 family. In terms of assembly, heterotrimer composed of an alpha, a beta and a gamma chain.

EIF-2 functions in the early steps of protein synthesis by forming a ternary complex with GTP and initiator tRNA. This chain is Translation initiation factor 2 subunit beta, found in Metallosphaera sedula (strain ATCC 51363 / DSM 5348 / JCM 9185 / NBRC 15509 / TH2).